The chain runs to 298 residues: Protoheme IX farnesyltransferase (298 aa).

9 consecutive transmembrane segments (helical) span residues 29–49 (LIVFTAMIGMCLATPDFPPLL), 51–71 (FGVASLGIALVSFAAAALNCL), 97–117 (ETVTLATALGAAGLWLLHGFI), 120–140 (LTMWLTLATFVGYTVIYTLIL), 148–168 (IVIGGASGAMPPLLGWTAMTG), 175–195 (LVLFLIIFLWTPPHFWALACY), 221–241 (ILWYTLMLAAASLIPVSLGMS), 243–263 (GFYLIAIGLLDLVFLGYAIAL), and 278–298 (YSILYLTLLFAALFADRLIVL).

This sequence belongs to the UbiA prenyltransferase family. Protoheme IX farnesyltransferase subfamily.

Its subcellular location is the cell inner membrane. The enzyme catalyses heme b + (2E,6E)-farnesyl diphosphate + H2O = Fe(II)-heme o + diphosphate. It functions in the pathway porphyrin-containing compound metabolism; heme O biosynthesis; heme O from protoheme: step 1/1. Converts heme B (protoheme IX) to heme O by substitution of the vinyl group on carbon 2 of heme B porphyrin ring with a hydroxyethyl farnesyl side group. The chain is Protoheme IX farnesyltransferase from Dechloromonas aromatica (strain RCB).